The sequence spans 200 residues: Urease accessory protein UreG (200 aa).

Residue 11 to 18 (GPVGSGKT) coordinates GTP.

It belongs to the SIMIBI class G3E GTPase family. UreG subfamily. Homodimer. UreD, UreF and UreG form a complex that acts as a GTP-hydrolysis-dependent molecular chaperone, activating the urease apoprotein by helping to assemble the nickel containing metallocenter of UreC. The UreE protein probably delivers the nickel.

The protein resides in the cytoplasm. In terms of biological role, facilitates the functional incorporation of the urease nickel metallocenter. This process requires GTP hydrolysis, probably effectuated by UreG. This chain is Urease accessory protein UreG, found in Thermosynechococcus vestitus (strain NIES-2133 / IAM M-273 / BP-1).